A 133-amino-acid chain; its full sequence is Protein PsiE homolog (133 aa).

The next 4 membrane-spanning stretches (helical) occupy residues 13-33 (LQWI…IFLI), 55-75 (VESI…IKYF), 81-101 (FPLR…IIVS), and 105-125 (PMET…LYIS).

This sequence belongs to the PsiE family.

Its subcellular location is the cell membrane. The protein is Protein PsiE homolog of Bacillus cereus (strain ATCC 10987 / NRS 248).